The chain runs to 112 residues: Na(+)/H(+) antiporter subunit C (112 aa).

The next 3 helical transmembrane spans lie at Leu-4–Leu-21, Val-28–Gln-50, and Gln-70–Tyr-92.

Belongs to the CPA3 antiporters (TC 2.A.63) subunit C family. In terms of assembly, forms a heterooligomeric complex that consists of seven subunits: MrpA, MrpB, MrpC, MrpD, MrpE, MrpF and MrpG.

The protein localises to the cell membrane. Its function is as follows. Mnh complex is a Na(+)Li(+)/H(+) antiporter involved in Na(+) and/or Li(+) excretion and Na(+) resistance. Na(+)/H(+) antiport consumes a transmembrane electrical potential, and is thus inferred to be electrogenic. Does not transport K(+), Ca(2+) or Mg(2+). This Alkalihalophilus pseudofirmus (strain ATCC BAA-2126 / JCM 17055 / OF4) (Bacillus pseudofirmus) protein is Na(+)/H(+) antiporter subunit C (mrpC).